We begin with the raw amino-acid sequence, 198 residues long: Probable molybdenum cofactor guanylyltransferase (198 aa).

GTP is bound by residues 9 to 11 (LAG), K22, D66, and D95. Mg(2+) is bound at residue D95.

This sequence belongs to the MobA family. The cofactor is Mg(2+).

It is found in the cytoplasm. It catalyses the reaction Mo-molybdopterin + GTP + H(+) = Mo-molybdopterin guanine dinucleotide + diphosphate. Its function is as follows. Transfers a GMP moiety from GTP to Mo-molybdopterin (Mo-MPT) cofactor (Moco or molybdenum cofactor) to form Mo-molybdopterin guanine dinucleotide (Mo-MGD) cofactor. The chain is Probable molybdenum cofactor guanylyltransferase from Clostridium perfringens (strain ATCC 13124 / DSM 756 / JCM 1290 / NCIMB 6125 / NCTC 8237 / Type A).